A 182-amino-acid chain; its full sequence is Ribosome maturation factor RimM (182 aa).

The region spanning 103–182 is the PRC barrel domain; that stretch reads EDEFYWRELF…RIEVDWDPGF (80 aa).

It belongs to the RimM family. Binds ribosomal protein uS19.

It is found in the cytoplasm. In terms of biological role, an accessory protein needed during the final step in the assembly of 30S ribosomal subunit, possibly for assembly of the head region. Essential for efficient processing of 16S rRNA. May be needed both before and after RbfA during the maturation of 16S rRNA. It has affinity for free ribosomal 30S subunits but not for 70S ribosomes. The chain is Ribosome maturation factor RimM from Vibrio parahaemolyticus serotype O3:K6 (strain RIMD 2210633).